We begin with the raw amino-acid sequence, 493 residues long: Xaa-Pro dipeptidase (493 aa).

Ala-2 is subject to N-acetylalanine. Residue Ser-167 is modified to Phosphoserine. Residue His-255 participates in a dipeptide binding. Asp-276, Asp-287, and His-370 together coordinate Mn(2+). Residue Asp-287 coordinates a dipeptide. His-377 and Arg-398 together coordinate a dipeptide. Residues Glu-412 and Glu-452 each coordinate Mn(2+).

This sequence belongs to the peptidase M24B family. Eukaryotic-type prolidase subfamily. In terms of assembly, homodimer. It depends on Mn(2+) as a cofactor.

It carries out the reaction Xaa-L-Pro dipeptide + H2O = an L-alpha-amino acid + L-proline. Its activity is regulated as follows. Specifically inhibited by the pseudodipeptide CQ31. Inhibition by CQ31 indirectly activates the CARD8 inflammasome: dipeptide accumulation following PEPD inactivation weaky inhibit dipeptidyl peptidases DDP8 and DPP9, relieving DPP8- and/or DPP9-mediated inhibition of CARD8. Dipeptidase that catalyzes the hydrolysis of dipeptides with a prolyl (Xaa-Pro) or hydroxyprolyl residue in the C-terminal position. The preferred dipeptide substrate is Gly-Pro, but other Xaa-Pro dipeptides, such as Ala-Pro, Met-Pro, Phe-Pro, Val-Pro and Leu-Pro, can be cleaved. Plays an important role in collagen metabolism because the high level of iminoacids in collagen. The sequence is that of Xaa-Pro dipeptidase from Homo sapiens (Human).